Reading from the N-terminus, the 352-residue chain is DNA polymerase IV (352 aa).

The region spanning 3 to 187 (VLFVDFDYFY…LDIADVPGIG (185 aa)) is the UmuC domain. Asp7 and Asp105 together coordinate Mg(2+). Residue Glu106 is part of the active site.

Belongs to the DNA polymerase type-Y family. In terms of assembly, monomer. Interacts with the PCNA heterotrimer via PCNA1. It depends on Mg(2+) as a cofactor.

It is found in the cytoplasm. It catalyses the reaction DNA(n) + a 2'-deoxyribonucleoside 5'-triphosphate = DNA(n+1) + diphosphate. Functionally, poorly processive, error-prone DNA polymerase involved in untargeted mutagenesis. Copies undamaged DNA at stalled replication forks, which arise in vivo from mismatched or misaligned primer ends. These misaligned primers can be extended by PolIV. Exhibits no 3'-5' exonuclease (proofreading) activity. It is involved in translesional synthesis. This Saccharolobus solfataricus (strain ATCC 35092 / DSM 1617 / JCM 11322 / P2) (Sulfolobus solfataricus) protein is DNA polymerase IV (dbh).